A 587-amino-acid chain; its full sequence is Trihelix transcription factor GTL1 (587 aa).

Composition is skewed to gly residues over residues 1 to 10 and 41 to 54; these read MEQGGGGGGN and GGLGGGGGGGGGGS. The disordered stretch occupies residues 1–63; the sequence is MEQGGGGGGN…SASSSSGNRW (63 aa). One can recognise a Myb-like 1 domain in the interval 55 to 119; sequence ASSSSGNRWP…KCKEKFENVQ (65 aa). Residues 96-103 carry the Nuclear localization signal 1 motif; the sequence is SRKLLELG. The span at 173-194 shows a compositional bias: low complexity; the sequence is SSSPFPVFSQPQPQTQTQPPQT. Positions 173 to 264 are disordered; the sequence is SSSPFPVFSQ…RKRGNRGGGG (92 aa). Pro residues predominate over residues 201-210; sequence PTPPPLPLPS. A compositionally biased stretch (low complexity) spans 221–232; sequence SSHSSSTASGMG. A compositionally biased stretch (acidic residues) spans 233-242; sequence SDDDDDDMDV. Residues 285 to 328 are a coiled coil; that stretch reads QRSFLEALEKREQERLDREEAWKRQEMARLAREHEVMSQERAAS. The disordered stretch occupies residues 348 to 435; the sequence is QLPPSLSSQP…EQSSLPSSSR (88 aa). A compositionally biased stretch (pro residues) spans 356 to 366; sequence QPPPPYQPPPA. 2 stretches are compositionally biased toward low complexity: residues 379 to 395 and 411 to 434; these read AQSQSQQPIMAIPQQQI and QKQQQQPQQEMVMSSEQSSLPSSS. The Myb-like 2 domain occupies 434 to 492; that stretch reads SRWPKAEILALINLRSGMEPRYQDNVPKGLLWEEISTSMKRMGYNRNAKRCKEKWENIN. The Nuclear localization signal 2 motif lies at 472-479; that stretch reads MKRMGYNR. The disordered stretch occupies residues 530–587; sequence GGGSSTSGLPQDQKQSPVTAMKPPQEGLVNVQQTHGSASTEEEEPIEESPQGTEKKTL. Polar residues-rich tracts occupy residues 538 to 547 and 559 to 568; these read LPQDQKQSPV and NVQQTHGSAS.

In terms of tissue distribution, mostly expressed in siliques, and, to a lower extent, in growing root hairs, leaves, stems, and flowers. Present in abaxial epidermal cells, predominantly in guard cells, pavement cells, and meristemoids.

It is found in the nucleus. In terms of biological role, transcription repressor that binds specific DNA sequence such as GT3 box 5'-GGTAAA-3' in the SDD1 promoter. Negative regulator of water use efficiency (WUE) via the promotion of stomatal density and distribution by the transcription repression of SDD1. Regulates the expression of several cell cycle genes and endoreduplication, especially in trichomes where it prevents ploidy-dependent plant cell growth. Regulates negatively root hair growth by directly binding RSL4 promoter and repressing RSL4 expression. This chain is Trihelix transcription factor GTL1, found in Arabidopsis thaliana (Mouse-ear cress).